The primary structure comprises 140 residues: Large ribosomal subunit protein bL17 (140 aa).

The tract at residues 119–140 (DTTAKGQDSGPVQVEEQENEEA) is disordered.

Belongs to the bacterial ribosomal protein bL17 family. As to quaternary structure, part of the 50S ribosomal subunit. Contacts protein L32.

In Zymomonas mobilis subsp. mobilis (strain ATCC 31821 / ZM4 / CP4), this protein is Large ribosomal subunit protein bL17.